A 148-amino-acid polypeptide reads, in one-letter code: SUMO-conjugating enzyme UBC9 (148 aa).

The 147-residue stretch at 1–147 (MASKRILKEL…ARTWTQKYAM (147 aa)) folds into the UBC core domain. Cys-85 (glycyl thioester intermediate) is an active-site residue.

The protein belongs to the ubiquitin-conjugating enzyme family. Interacts with CHIP. As to expression, highest expression in young stems and old leaves. Lowest levels in floral buds, anthers and young leaves.

It participates in protein modification; protein sumoylation. In terms of biological role, accepts the ubiquitin-like protein SUMO/SMT3 from the E1 complex and catalyzes its covalent attachment to other proteins. Mediates the selective degradation of short-lived and abnormal proteins. The protein is SUMO-conjugating enzyme UBC9 (UBC9) of Arabidopsis thaliana (Mouse-ear cress).